The chain runs to 1748 residues: Flagellar attachment zone protein 1 (1748 aa).

Coiled-coil stretches lie at residues 613 to 657, 684 to 864, and 903 to 1663; these read REQE…KLQK, VTLD…HKVR, and NDHM…SALE. A run of 41 repeats spans residues 1012–1025, 1026–1039, 1040–1053, 1054–1067, 1068–1081, 1082–1095, 1096–1109, 1110–1123, 1124–1137, 1138–1151, 1152–1165, 1166–1179, 1180–1193, 1194–1207, 1208–1221, 1222–1235, 1236–1249, 1250–1263, 1264–1277, 1278–1291, 1292–1305, 1306–1319, 1320–1333, 1334–1347, 1348–1361, 1362–1375, 1376–1389, 1390–1403, 1404–1417, 1418–1431, 1432–1445, 1446–1459, 1460–1473, 1474–1487, 1488–1501, 1502–1515, 1516–1529, 1530–1543, 1544–1557, 1558–1571, and 1572–1585. The interval 1012-1529 is 41 X 14 AA tandem repeats of E-E-L-E-L-K-[VA]-A-E-N-E-K-L-A; sequence EELELKAAEN…LKAAENEKLA (518 aa).

Its subcellular location is the cell projection. The protein localises to the cilium. It is found in the flagellum. A component of FAZ filament that is required for correct FAZ assembly and attachment. Not essential for new flagellum growth. The polypeptide is Flagellar attachment zone protein 1 (Trypanosoma brucei gambiense (strain MHOM/CI/86/DAL972)).